Consider the following 195-residue polypeptide: N-(5'-phosphoribosyl)anthranilate isomerase (195 aa).

Belongs to the TrpF family.

The catalysed reaction is N-(5-phospho-beta-D-ribosyl)anthranilate = 1-(2-carboxyphenylamino)-1-deoxy-D-ribulose 5-phosphate. The protein operates within amino-acid biosynthesis; L-tryptophan biosynthesis; L-tryptophan from chorismate: step 3/5. This is N-(5'-phosphoribosyl)anthranilate isomerase from Methanoregula boonei (strain DSM 21154 / JCM 14090 / 6A8).